Consider the following 237-residue polypeptide: N-alpha-acetyltransferase 40 (237 aa).

G2 carries N-myristoyl glycine lipidation. The N-acetyltransferase domain occupies 63–216; sequence SGLEPATVDW…EDCSYEILSR (154 aa). Substrate is bound by residues Y85, 127-129, and Y138; that span reads DVE. Acetyl-CoA is bound by residues 140–142 and 148–153; these read VQL and RKGLGK. Substrate is bound at residue T174. N179 serves as a coordination point for acetyl-CoA. 2 residues coordinate substrate: S197 and Y211.

The protein belongs to the acetyltransferase family. NAA40 subfamily. In terms of tissue distribution, widely expressed; with the highest expression level in liver and the lowest expression in brain (at protein level).

The protein localises to the cytoplasm. It is found in the nucleus. The catalysed reaction is N-terminal L-seryl-[histone H4] + acetyl-CoA = N-terminal N(alpha)-acetyl-L-seryl-[histone H4] + CoA + H(+). It catalyses the reaction N-terminal L-seryl-[histone H2A] + acetyl-CoA = N-terminal N(alpha)-acetyl-L-seryl-[histone H2A] + CoA + H(+). N-alpha-acetyltransferase that specifically mediates the acetylation of the N-terminal residues of histones H4 and H2A. In contrast to other N-alpha-acetyltransferase, has a very specific selectivity for histones H4 and H2A N-terminus and specifically recognizes the 'Ser-Gly-Arg-Gly sequence'. Acts as a negative regulator of apoptosis. May play a role in hepatic lipid metabolism. This chain is N-alpha-acetyltransferase 40, found in Homo sapiens (Human).